The primary structure comprises 374 residues: Pectate lyase 2 (374 aa).

The signal sequence occupies residues 1 to 22; sequence MKYLLPTAATGLLLLAAQPAVA. A disulfide bridge connects residues Cys-93 and Cys-176. The Ca(2+) site is built by Asp-150, Asp-152, Glu-187, and Asp-191. Arg-239 is a catalytic residue. Cys-350 and Cys-373 are oxidised to a cystine.

The protein belongs to the polysaccharide lyase 1 family. PLADES subfamily. Requires Ca(2+) as cofactor.

Its subcellular location is the secreted. It catalyses the reaction Eliminative cleavage of (1-&gt;4)-alpha-D-galacturonan to give oligosaccharides with 4-deoxy-alpha-D-galact-4-enuronosyl groups at their non-reducing ends.. It participates in glycan metabolism; pectin degradation; 2-dehydro-3-deoxy-D-gluconate from pectin: step 2/5. Involved in maceration and soft-rotting of plant tissue. This Pectobacterium atrosepticum (strain SCRI 1043 / ATCC BAA-672) (Erwinia carotovora subsp. atroseptica) protein is Pectate lyase 2 (pel2).